We begin with the raw amino-acid sequence, 70 residues long: ATP synthase subunit c (70 aa).

The next 2 membrane-spanning stretches (helical) occupy residues 4–24 and 48–68; these read IAAG…NGML and ISMA…FVLI.

It belongs to the ATPase C chain family. As to quaternary structure, F-type ATPases have 2 components, F(1) - the catalytic core - and F(0) - the membrane proton channel. F(1) has five subunits: alpha(3), beta(3), gamma(1), delta(1), epsilon(1). F(0) has three main subunits: a(1), b(2) and c(10-14). The alpha and beta chains form an alternating ring which encloses part of the gamma chain. F(1) is attached to F(0) by a central stalk formed by the gamma and epsilon chains, while a peripheral stalk is formed by the delta and b chains.

The protein localises to the cell membrane. F(1)F(0) ATP synthase produces ATP from ADP in the presence of a proton or sodium gradient. F-type ATPases consist of two structural domains, F(1) containing the extramembraneous catalytic core and F(0) containing the membrane proton channel, linked together by a central stalk and a peripheral stalk. During catalysis, ATP synthesis in the catalytic domain of F(1) is coupled via a rotary mechanism of the central stalk subunits to proton translocation. Functionally, key component of the F(0) channel; it plays a direct role in translocation across the membrane. A homomeric c-ring of between 10-14 subunits forms the central stalk rotor element with the F(1) delta and epsilon subunits. The chain is ATP synthase subunit c from Oenococcus oeni (strain ATCC BAA-331 / PSU-1).